Here is a 301-residue protein sequence, read N- to C-terminus: Ankyrin repeat domain-containing protein 29 (301 aa).

ANK repeat units lie at residues 11–41 (PLAN…DVDC), 45–74 (HGTT…DINL), 78–107 (SGTT…STEF), 111–140 (DGGT…NIHD), 144–173 (DGAT…KVNQ), 177–206 (DGTA…DRDA), 210–239 (DGTT…TLGI), and 242–271 (NGTS…DPSL).

In Homo sapiens (Human), this protein is Ankyrin repeat domain-containing protein 29 (ANKRD29).